The chain runs to 766 residues: BMP/retinoic acid-inducible neural-specific protein 3 (766 aa).

The signal sequence occupies residues 1–33 (MIWRRRAGAELSSLMALWEWIVLSLHCWVLAVA). An MACPF domain is found at 74 to 264 (RYKIYREFGR…FVQAALSYIA (191 aa)). Residues N168, N337, N456, N562, N609, and N641 are each glycosylated (N-linked (GlcNAc...) asparagine).

Belongs to the BRINP family. In terms of tissue distribution, expressed in the brain. Weakly expressed in embryonic stem (ES) cells. Expressed in ES-derived neural stem cells (NSCs) and neuronal cells.

The protein resides in the secreted. It localises to the mitochondrion. Functionally, inhibits neuronal cell proliferation by negative regulation of the cell cycle transition. Promotes pituitary gonadotrope cell proliferation, migration and invasion, when overexpressed. May play a role in cell pituitary tumor development. This chain is BMP/retinoic acid-inducible neural-specific protein 3 (Brinp3), found in Mus musculus (Mouse).